The following is a 294-amino-acid chain: Type I ribosome-inactivating protein trichoanguina (294 aa).

The first 19 residues, 1-19, serve as a signal peptide directing secretion; it reads MALSFFFLAISLGSPTAIG. A glycan (N-linked (GlcNAc...) asparagine) is linked at Asn70. Active-site residues include Glu177 and Arg180. Residue Asn220 is glycosylated (N-linked (GlcNAc...) asparagine). Residues 265-294 constitute a propeptide that is removed on maturation; sequence VGSEYDIPTTILHPGAMGMLHNQNGNYVTM.

Belongs to the ribosome-inactivating protein family. Type 1 RIP subfamily.

The enzyme catalyses Endohydrolysis of the N-glycosidic bond at one specific adenosine on the 28S rRNA.. Its function is as follows. Inhibits protein synthesis by depurinating 28S rRNA in ribosomes. This is Type I ribosome-inactivating protein trichoanguina (TCA) from Trichosanthes anguina (Snake gourd).